The chain runs to 89 residues: Small ribosomal subunit protein bS20 (89 aa).

The protein belongs to the bacterial ribosomal protein bS20 family.

Binds directly to 16S ribosomal RNA. The polypeptide is Small ribosomal subunit protein bS20 (Helicobacter acinonychis (strain Sheeba)).